A 129-amino-acid polypeptide reads, in one-letter code: Serum amyloid A protein (129 aa).

The N-terminal stretch at 1–18 (MKLFPGLLFCSLVLGVSG) is a signal peptide. Position 19 is a pyrrolidone carboxylic acid (glutamine 19). Residues 92-129 (GDSGHGAEDSKADQAANEWGRSGKDPNHFRPAGLPDKY) are disordered. Residues 112 to 129 (RSGKDPNHFRPAGLPDKY) constitute a propeptide, often cleaved during amyloidogenesis.

This sequence belongs to the SAA family. Post-translationally, this protein is the precursor of amyloid protein A, which is formed by the removal of residues from the C-terminal end. In terms of tissue distribution, expressed by the liver; secreted in plasma.

Its subcellular location is the secreted. Its function is as follows. Major acute phase reactant. Apolipoprotein of the HDL complex. The sequence is that of Serum amyloid A protein (SAA1) from Canis lupus familiaris (Dog).